We begin with the raw amino-acid sequence, 416 residues long: Serine hydroxymethyltransferase (416 aa).

(6S)-5,6,7,8-tetrahydrofolate is bound by residues Leu-121 and Gly-125–Leu-127. The residue at position 229 (Lys-229) is an N6-(pyridoxal phosphate)lysine.

This sequence belongs to the SHMT family. As to quaternary structure, homodimer. The cofactor is pyridoxal 5'-phosphate.

It localises to the cytoplasm. The catalysed reaction is (6R)-5,10-methylene-5,6,7,8-tetrahydrofolate + glycine + H2O = (6S)-5,6,7,8-tetrahydrofolate + L-serine. The protein operates within one-carbon metabolism; tetrahydrofolate interconversion. Its pathway is amino-acid biosynthesis; glycine biosynthesis; glycine from L-serine: step 1/1. Functionally, catalyzes the reversible interconversion of serine and glycine with tetrahydrofolate (THF) serving as the one-carbon carrier. This reaction serves as the major source of one-carbon groups required for the biosynthesis of purines, thymidylate, methionine, and other important biomolecules. Also exhibits THF-independent aldolase activity toward beta-hydroxyamino acids, producing glycine and aldehydes, via a retro-aldol mechanism. The polypeptide is Serine hydroxymethyltransferase (Azoarcus sp. (strain BH72)).